We begin with the raw amino-acid sequence, 289 residues long: 2-hydroxy-6-oxononadienedioate/2-hydroxy-6-oxononatrienedioate hydrolase 1 (289 aa).

The AB hydrolase-1 domain maps to threonine 39 to histidine 275. Histidine 269 acts as the Proton acceptor in catalysis.

The protein belongs to the AB hydrolase superfamily. MhpC family. Homodimer.

The catalysed reaction is (2Z,4E)-2-hydroxy-6-oxonona-2,4-dienedioate + H2O = (2Z)-2-hydroxypenta-2,4-dienoate + succinate + H(+). It catalyses the reaction (2Z,4E,7E)-2-hydroxy-6-oxonona-2,4,7-trienedioate + H2O = (2Z)-2-hydroxypenta-2,4-dienoate + fumarate + H(+). It participates in aromatic compound metabolism; 3-phenylpropanoate degradation. Catalyzes the cleavage of the C5-C6 bond of 2-hydroxy-6-oxononadienedioate and 2-hydroxy-6-oxononatrienedioate, a dienol ring fission product of the bacterial meta-cleavage pathway for degradation of phenylpropionic acid. The protein is 2-hydroxy-6-oxononadienedioate/2-hydroxy-6-oxononatrienedioate hydrolase 1 of Dechloromonas aromatica (strain RCB).